The sequence spans 166 residues: DNA replication protein 17 (166 aa).

It belongs to the phi29likevirus protein p56 family. Homodimer. Interacts with the histone-like protein p6; this interaction optimizes the binding of protein p6 at the viral DNA ends, thus favoring the initiation of replication.

In terms of biological role, involved in the replication of viral DNA. It is required at the very beginning of the virus amplification, conditions in which a low number of viral DNA molecules enter the host cell, possibly to recruit the limiting amount of initiation factors at the replication origins. Once the infection process is established and the other replication proteins reach optimal concentration, it becomes dispensable. Optimizes the binding of protein p6 at the viral DNA ends, thus favoring the initiation of replication. The chain is DNA replication protein 17 (17) from Bacillus subtilis (Bacteriophage phi-29).